The following is a 91-amino-acid chain: MLLQRIGIEHLRIWILLLLISLVPAALIRDRRRTSDDFSLFSYDYDDKADAHDADAAFRKFEALCSARSQQPSTSKPSLIDALCTSALKKE.

A signal peptide spans 1-25 (MLLQRIGIEHLRIWILLLLISLVPA).

This is an uncharacterized protein from Caenorhabditis elegans.